The primary structure comprises 512 residues: Kynurenine 3-monooxygenase (512 aa).

It belongs to the aromatic-ring hydroxylase family. KMO subfamily. FAD serves as cofactor.

The protein localises to the mitochondrion outer membrane. The catalysed reaction is L-kynurenine + NADPH + O2 + H(+) = 3-hydroxy-L-kynurenine + NADP(+) + H2O. It participates in cofactor biosynthesis; NAD(+) biosynthesis; quinolinate from L-kynurenine: step 1/3. Its function is as follows. Catalyzes the hydroxylation of L-kynurenine (L-Kyn) to form 3-hydroxy-L-kynurenine (L-3OHKyn). Required for synthesis of quinolinic acid. The polypeptide is Kynurenine 3-monooxygenase (bna4) (Aspergillus fumigatus (strain ATCC MYA-4609 / CBS 101355 / FGSC A1100 / Af293) (Neosartorya fumigata)).